The sequence spans 470 residues: Desmin (470 aa).

Positions 2 to 108 are head; sequence SQAYSSSQRV…QEFLTTRTNE (107 aa). A Phosphoserine; by CDK1 modification is found at Ser7. At Ser12 the chain carries Phosphoserine; by AURKB. The residue at position 16 (Arg16) is an Omega-N-methylarginine. Phosphothreonine; by AURKB and ROCK1 is present on Thr17. Ser28 is subject to Phosphoserine; by CDK1. Ser31 bears the Phosphoserine mark. Residue Ser32 is modified to Phosphoserine; by CDK1. Arg37 carries the asymmetric dimethylarginine; alternate modification. Position 37 is an omega-N-methylarginine; alternate (Arg37). Position 45 is a phosphoserine (Ser45). Arg58 bears the ADP-ribosylarginine mark. Ser60 carries the post-translational modification Phosphoserine; by AURKB. A Phosphoserine modification is found at Ser68. Arg70 carries the omega-N-methylarginine modification. 2 positions are modified to phosphothreonine; by ROCK1: Thr76 and Thr77. A Phosphoserine modification is found at Ser81. Residues 108-416 enclose the IF rod domain; that stretch reads EKVELQELND…KLLEGEESRI (309 aa). Residues 109-141 are coil 1A; the sequence is KVELQELNDRFANYIEKVRFLEQQNAALAAEVN. Residues 142-151 form a linker 1 region; that stretch reads RLKGREPTRV. Residues 152-252 form a coil 1B region; that stretch reads AELYEEELRE…HEEEIRELQA (101 aa). Residues 253–268 form a linker 12 region; sequence QLQEQQVQVEMDMSKP. Positions 268–415 are interaction with NEB; sequence PDLTAALRDI…RKLLEGEESR (148 aa). The coil 2A stretch occupies residues 269–287; the sequence is DLTAALRDIRAQYETIAAK. The tract at residues 288-295 is linker 2; that stretch reads NISEAEEW. 4 positions are modified to phosphoserine: Ser290, Ser358, Ser361, and Ser424. The tract at residues 296–412 is coil 2B; the sequence is YKSKVSDLTQ…ATYRKLLEGE (117 aa). The interval 413 to 470 is tail; the sequence is ESRINLPIQTYSALNFRETSPEQRGSEVHTKKTVMIKTIETRDGEVVSEATQQQHEVL. Residues 438 to 453 are interaction with CRYAB; that stretch reads SEVHTKKTVMIKTIET.

Belongs to the intermediate filament family. Homomer. Interacts with DST. Interacts with MTM1. Interacts with EPPK1; interaction is dependent of higher-order structure of intermediate filament. Interacts with CRYAB. Interacts with NEB (via nebulin repeats 160-164). Interacts (via rod region) with NEBL (via nebulin repeats 1-5). Interacts with ASB2 isoform 1; the interaction targets DES for proteasomal degradation. Interacts with PLEC isoform 1C. Interacts with PKP1. Interacts with FLII. Post-translationally, ADP-ribosylation prevents ability to form intermediate filaments. In terms of processing, phosphorylation at Ser-7, Ser-28 and Ser-32 by CDK1, phosphorylation at Ser-60 by AURKB and phosphorylation at Thr-76 by ROCK1 contribute to efficient separation of desmin intermediate filaments during mitosis. Ubiquitination by a SCF-like complex containing ASB2 isoform 1 leads to proteasomal degradation.

It localises to the cytoplasm. The protein localises to the myofibril. It is found in the sarcomere. Its subcellular location is the z line. The protein resides in the cell membrane. It localises to the sarcolemma. The protein localises to the nucleus. It is found in the cell tip. Its subcellular location is the nucleus envelope. In terms of biological role, muscle-specific type III intermediate filament essential for proper muscular structure and function. Plays a crucial role in maintaining the structure of sarcomeres, inter-connecting the Z-disks and forming the myofibrils, linking them not only to the sarcolemmal cytoskeleton, but also to the nucleus and mitochondria, thus providing strength for the muscle fiber during activity. In adult striated muscle they form a fibrous network connecting myofibrils to each other and to the plasma membrane from the periphery of the Z-line structures. May act as a sarcomeric microtubule-anchoring protein: specifically associates with detyrosinated tubulin-alpha chains, leading to buckled microtubules and mechanical resistance to contraction. Required for nuclear membrane integrity, via anchoring at the cell tip and nuclear envelope, resulting in maintenance of microtubule-derived intracellular mechanical forces. Contributes to the transcriptional regulation of the NKX2-5 gene in cardiac progenitor cells during a short period of cardiomyogenesis and in cardiac side population stem cells in the adult. Plays a role in maintaining an optimal conformation of nebulette (NEB) on heart muscle sarcomeres to bind and recruit cardiac alpha-actin. The sequence is that of Desmin (DES) from Homo sapiens (Human).